Here is a 511-residue protein sequence, read N- to C-terminus: Maturase K (511 aa).

Belongs to the intron maturase 2 family. MatK subfamily.

The protein localises to the plastid. The protein resides in the chloroplast. Its function is as follows. Usually encoded in the trnK tRNA gene intron. Probably assists in splicing its own and other chloroplast group II introns. The chain is Maturase K from Acorus calamus var. americanus (American sweet flag).